The sequence spans 246 residues: tRNA (guanine-N(1)-)-methyltransferase (246 aa).

S-adenosyl-L-methionine is bound by residues Gly-114 and 134-139 (IGDYIL).

It belongs to the RNA methyltransferase TrmD family. Homodimer.

The protein localises to the cytoplasm. It carries out the reaction guanosine(37) in tRNA + S-adenosyl-L-methionine = N(1)-methylguanosine(37) in tRNA + S-adenosyl-L-homocysteine + H(+). In terms of biological role, specifically methylates guanosine-37 in various tRNAs. The protein is tRNA (guanine-N(1)-)-methyltransferase of Coxiella burnetii (strain CbuK_Q154) (Coxiella burnetii (strain Q154)).